A 223-amino-acid chain; its full sequence is Ion-translocating oxidoreductase complex subunit E (223 aa).

Helical transmembrane passes span 17–37 (NGVL…GTAT), 40–60 (LGMG…VAMF), 70–90 (IPVY…GMNA), 94–114 (ELYK…LPLA), 129–149 (FLDG…IGAV), and 182–202 (WGIL…LMVV).

Belongs to the NqrDE/RnfAE family. The complex is composed of six subunits: RnfA, RnfB, RnfC, RnfD, RnfE and RnfG.

It localises to the cell inner membrane. Its function is as follows. Part of a membrane-bound complex that couples electron transfer with translocation of ions across the membrane. The chain is Ion-translocating oxidoreductase complex subunit E from Paramagnetospirillum magneticum (strain ATCC 700264 / AMB-1) (Magnetospirillum magneticum).